A 232-amino-acid chain; its full sequence is 5'-methylthioadenosine/S-adenosylhomocysteine nucleosidase (232 aa).

Catalysis depends on glutamate 14, which acts as the Proton acceptor. Substrate is bound by residues glycine 80, valine 154, and methionine 175–glutamate 176. Catalysis depends on aspartate 199, which acts as the Proton donor.

This sequence belongs to the PNP/UDP phosphorylase family. MtnN subfamily.

The catalysed reaction is S-adenosyl-L-homocysteine + H2O = S-(5-deoxy-D-ribos-5-yl)-L-homocysteine + adenine. It carries out the reaction S-methyl-5'-thioadenosine + H2O = 5-(methylsulfanyl)-D-ribose + adenine. It catalyses the reaction 5'-deoxyadenosine + H2O = 5-deoxy-D-ribose + adenine. The protein operates within amino-acid biosynthesis; L-methionine biosynthesis via salvage pathway; S-methyl-5-thio-alpha-D-ribose 1-phosphate from S-methyl-5'-thioadenosine (hydrolase route): step 1/2. Its function is as follows. Catalyzes the irreversible cleavage of the glycosidic bond in both 5'-methylthioadenosine (MTA) and S-adenosylhomocysteine (SAH/AdoHcy) to adenine and the corresponding thioribose, 5'-methylthioribose and S-ribosylhomocysteine, respectively. Also cleaves 5'-deoxyadenosine, a toxic by-product of radical S-adenosylmethionine (SAM) enzymes, into 5-deoxyribose and adenine. This Actinobacillus pleuropneumoniae serotype 5b (strain L20) protein is 5'-methylthioadenosine/S-adenosylhomocysteine nucleosidase.